The primary structure comprises 389 residues: MGKKDKNVSVEEEVDEAEIEKLAAENANKPAPQLTKEDLDAMDDAEPGTSRLALIGKMIKKVSIGTDISNISMPGSFILAKSTLSYFSDNFSSFFGELLKANKIDNELERMLQVQRYLFTTLKETEDTTRKPLNPILGETWQANIHVKDGDGNDVTDNYFFAEQISHHPPISSSTVYNKKEGVNCTFCLPVRSQFMGTYVKISFEGESHITFEKYDEKFTFVAPPMAIRIFRSFSEYVGKGILKSDKNDYLIKSTYTSKPLFGGVYNGFESKVYKGKEKLYKIKGTWSGDMKITNLKTNETTPFFTRPTESAKVVFPDDGNTLPTDSSVVWKGVFDASKKDDVKGMSQEKVKVEEEQRKLAHHRKNADEWKPVHFNKIDGRWQLVNLKD.

Coiled coils occupy residues 1 to 31 and 340 to 371; these read MGKK…NKPA and KDDV…DEWK. The disordered stretch occupies residues 1-43; it reads MGKKDKNVSVEEEVDEAEIEKLAAENANKPAPQLTKEDLDAMD.

The protein belongs to the OSBP family. Interacts with dstC.

The protein resides in the cytoplasm. Its function is as follows. May play a role in the regulation of the slug-fruiting body switch. The protein is Oxysterol-binding protein 1 (osbA) of Dictyostelium discoideum (Social amoeba).